The sequence spans 247 residues: DNA polymerase sliding clamp (247 aa).

This sequence belongs to the PCNA family. Homotrimer. The subunits circularize to form a toroid; DNA passes through its center. Replication factor C (RFC) is required to load the toroid on the DNA.

Its function is as follows. Sliding clamp subunit that acts as a moving platform for DNA processing. Responsible for tethering the catalytic subunit of DNA polymerase and other proteins to DNA during high-speed replication. In Methanospirillum hungatei JF-1 (strain ATCC 27890 / DSM 864 / NBRC 100397 / JF-1), this protein is DNA polymerase sliding clamp.